Reading from the N-terminus, the 274-residue chain is Coagulation factor IX (274 aa).

Tyr23 bears the Sulfotyrosine mark. An N-linked (GlcNAc...) asparagine glycan is attached at Asn25. The residue at position 26 (Ser26) is a Phosphoserine. N-linked (GlcNAc...) asparagine glycosylation is present at Asn35. Thr37 carries an O-linked (GalNAc...) threonine glycan. An N-linked (GlcNAc...) asparagine glycan is attached at Asn40. Positions 49–274 (VVGGEDAARG…IYTKVSRYEV (226 aa)) constitute a Peptidase S1 domain. Cys74 and Cys90 are oxidised to a cystine. His89 (charge relay system) is an active-site residue. The Ca(2+) site is built by Glu103, Asn105, Glu110, and Glu113. An N-linked (GlcNAc...) asparagine glycan is attached at Asn128. The active-site Charge relay system is Asp137. 2 disulfide bridges follow: Cys204-Cys218 and Cys229-Cys257. Ser233 (charge relay system) is an active-site residue.

Belongs to the peptidase S1 family. Heterodimer of a light chain and a heavy chain; disulfide-linked. Interacts (inactive and activated) with F11 (activated) in calcium-dependent manner. Interacts with SERPINC1. In terms of processing, activated by factor XIa, which excises the activation peptide. The propeptide can also be removed by snake venom protease. Activated by coagulation factor VIIa-tissue factor (F7-F3) complex in calcium-dependent manner.

Its subcellular location is the secreted. It catalyses the reaction Selective cleavage of Arg-|-Ile bond in factor X to form factor Xa.. Its function is as follows. Factor IX is a vitamin K-dependent plasma protein that participates in the intrinsic pathway of blood coagulation by converting factor X to its active form in the presence of Ca(2+) ions, phospholipids, and factor VIIIa. This chain is Coagulation factor IX (F9), found in Ovis aries (Sheep).